The primary structure comprises 96 residues: Methanol dehydrogenase [cytochrome c] subunit 2 (96 aa).

The first 22 residues, 1-22 (MKTTLIAAAIVALSGLAAPALA), serve as a signal peptide directing secretion. C28 and C34 form a disulfide bridge. The tract at residues 45–75 (IAGSKYDPKHDPKELNKQADSIKQMEERNKK) is disordered. The segment covering 50 to 61 (YDPKHDPKELNK) has biased composition (basic and acidic residues).

Belongs to the methanol dehydrogenase subunit 2 family. In terms of assembly, heterotetramer composed of 2 alpha and 2 beta subunits.

The protein resides in the periplasm. The catalysed reaction is 2 Fe(III)-[cytochrome cL] + a primary alcohol = 2 Fe(II)-[cytochrome cL] + an aldehyde + 2 H(+). Functionally, catalyzes the oxidation of primary alcohols including methanol. This chain is Methanol dehydrogenase [cytochrome c] subunit 2 (moxI), found in Methylorubrum extorquens (strain ATCC 14718 / DSM 1338 / JCM 2805 / NCIMB 9133 / AM1) (Methylobacterium extorquens).